The primary structure comprises 343 residues: Dimethyladenosine transferase 1, mitochondrial (343 aa).

S-adenosyl-L-methionine contacts are provided by residues 28–31 (QNFL), asparagine 29, leucine 31, glycine 56, glutamate 78, aspartate 133, and asparagine 169.

This sequence belongs to the class I-like SAM-binding methyltransferase superfamily. rRNA adenine N(6)-methyltransferase family. KsgA subfamily.

Its subcellular location is the mitochondrion. Functionally, probable S-adenosyl-L-methionine-dependent methyltransferase which specifically dimethylates mitochondrial 12S rRNA at the conserved stem loop. Also required for basal transcription of mitochondrial DNA. Stimulates transcription independently of the methyltransferase activity. This is Dimethyladenosine transferase 1, mitochondrial from Vermamoeba vermiformis (Amoeba).